We begin with the raw amino-acid sequence, 352 residues long: Protein Wnt-4a (352 aa).

An N-terminal signal peptide occupies residues 1 to 22 (MSSEYLIRSLLMLFLALFSANA). 11 disulfides stabilise this stretch: Cys78/Cys89, Cys128/Cys136, Cys138/Cys155, Cys206/Cys220, Cys208/Cys215, Cys280/Cys312, Cys297/Cys307, Cys311/Cys351, Cys327/Cys342, Cys329/Cys339, and Cys334/Cys335. Asn88 carries N-linked (GlcNAc...) asparagine glycosylation. Ser212 carries the O-palmitoleoyl serine; by PORCN lipid modification. Asn298 carries N-linked (GlcNAc...) asparagine glycosylation.

It belongs to the Wnt family. Palmitoleoylation is required for efficient binding to frizzled receptors. Depalmitoleoylation leads to Wnt signaling pathway inhibition. As to expression, caudal forebrain and neural keel, the floor plate, the gill slit and the developing pronephros.

The protein resides in the secreted. It is found in the extracellular space. The protein localises to the extracellular matrix. Its function is as follows. Ligand for members of the frizzled family of seven transmembrane receptors. Plays an important role in embryonic development. The chain is Protein Wnt-4a (wnt4a) from Danio rerio (Zebrafish).